Consider the following 358-residue polypeptide: tRNA pseudouridine synthase D (358 aa).

Aspartate 84 functions as the Nucleophile in the catalytic mechanism. Residues glycine 161–aspartate 312 form the TRUD domain.

The protein belongs to the pseudouridine synthase TruD family.

It carries out the reaction uridine(13) in tRNA = pseudouridine(13) in tRNA. Functionally, responsible for synthesis of pseudouridine from uracil-13 in transfer RNAs. This chain is tRNA pseudouridine synthase D, found in Nitrosococcus oceani (strain ATCC 19707 / BCRC 17464 / JCM 30415 / NCIMB 11848 / C-107).